A 56-amino-acid chain; its full sequence is Large ribosomal subunit protein eL37 (56 aa).

The Zn(2+) site is built by C19, C22, C34, and C37. A C4-type zinc finger spans residues 19 to 37; sequence CRRCGSVSFNVHTKQCTSC.

It belongs to the eukaryotic ribosomal protein eL37 family. Requires Zn(2+) as cofactor.

Binds to the 23S rRNA. The protein is Large ribosomal subunit protein eL37 (rpl37e) of Methanosarcina acetivorans (strain ATCC 35395 / DSM 2834 / JCM 12185 / C2A).